The chain runs to 431 residues: Enolase (431 aa).

Gln-167 is a (2R)-2-phosphoglycerate binding site. The active-site Proton donor is Glu-209. Residues Asp-246, Glu-289, and Asp-316 each contribute to the Mg(2+) site. (2R)-2-phosphoglycerate is bound by residues Lys-341, Arg-370, Ser-371, and Lys-392. The active-site Proton acceptor is Lys-341.

It belongs to the enolase family. In terms of assembly, component of the RNA degradosome, a multiprotein complex involved in RNA processing and mRNA degradation. The cofactor is Mg(2+).

It is found in the cytoplasm. The protein localises to the secreted. Its subcellular location is the cell surface. The catalysed reaction is (2R)-2-phosphoglycerate = phosphoenolpyruvate + H2O. It participates in carbohydrate degradation; glycolysis; pyruvate from D-glyceraldehyde 3-phosphate: step 4/5. Functionally, catalyzes the reversible conversion of 2-phosphoglycerate (2-PG) into phosphoenolpyruvate (PEP). It is essential for the degradation of carbohydrates via glycolysis. In Chromohalobacter salexigens (strain ATCC BAA-138 / DSM 3043 / CIP 106854 / NCIMB 13768 / 1H11), this protein is Enolase.